Reading from the N-terminus, the 438-residue chain is Fumarate hydratase class II (438 aa).

Substrate-binding positions include 76–78, 101–104, 111–113, and Thr159; these read SGT, HPND, and SSN. Catalysis depends on His160, which acts as the Proton donor/acceptor. The active site involves Ser291. Substrate-binding positions include Ser292 and 297 to 299; that span reads KTN.

Belongs to the class-II fumarase/aspartase family. Fumarase subfamily. As to quaternary structure, homotetramer.

The protein resides in the cytoplasm. It catalyses the reaction (S)-malate = fumarate + H2O. It participates in carbohydrate metabolism; tricarboxylic acid cycle; (S)-malate from fumarate: step 1/1. Functionally, involved in the TCA cycle. Catalyzes the stereospecific interconversion of fumarate to L-malate. The chain is Fumarate hydratase class II from Saccharolobus solfataricus (strain ATCC 35092 / DSM 1617 / JCM 11322 / P2) (Sulfolobus solfataricus).